A 100-amino-acid polypeptide reads, in one-letter code: Large ribosomal subunit protein uL23 (100 aa).

It belongs to the universal ribosomal protein uL23 family. In terms of assembly, part of the 50S ribosomal subunit. Contacts protein L29, and trigger factor when it is bound to the ribosome.

In terms of biological role, one of the early assembly proteins it binds 23S rRNA. One of the proteins that surrounds the polypeptide exit tunnel on the outside of the ribosome. Forms the main docking site for trigger factor binding to the ribosome. The chain is Large ribosomal subunit protein uL23 from Pseudoalteromonas atlantica (strain T6c / ATCC BAA-1087).